The following is a 69-amino-acid chain: MTKPTTEQPTIVKCPTCQSAVVWNAESPFRPFCSKKCQMIDFGEWADEEKSIPGAPDMSDSDGWSEDQY.

Residues Cys-14, Cys-17, Cys-33, and Cys-37 each contribute to the Zn(2+) site. The interval 46 to 69 (ADEEKSIPGAPDMSDSDGWSEDQY) is disordered. Residues 59 to 69 (SDSDGWSEDQY) show a composition bias toward acidic residues.

This sequence belongs to the DNA gyrase inhibitor YacG family. As to quaternary structure, interacts with GyrB. It depends on Zn(2+) as a cofactor.

In terms of biological role, inhibits all the catalytic activities of DNA gyrase by preventing its interaction with DNA. Acts by binding directly to the C-terminal domain of GyrB, which probably disrupts DNA binding by the gyrase. This chain is DNA gyrase inhibitor YacG, found in Aliivibrio fischeri (strain MJ11) (Vibrio fischeri).